The following is a 414-amino-acid chain: Transforming growth factor beta-2 proprotein (414 aa).

Positions 1-20 (MHYCVLSAFLLLHLVTVALS) are cleaved as a signal peptide. N-linked (GlcNAc...) asparagine glycans are attached at residues asparagine 72, asparagine 140, and asparagine 241. Disulfide bonds link cysteine 309-cysteine 318, cysteine 317-cysteine 380, cysteine 346-cysteine 411, and cysteine 350-cysteine 413.

This sequence belongs to the TGF-beta family. As to quaternary structure, interacts with the serine proteases, HTRA1 and HTRA3. Interacts with ASPN. Interacts with MFAP5. In terms of assembly, interacts with Transforming growth factor beta-2 (TGF-beta-2) chain; interaction is non-covalent and maintains (TGF-beta-2) in a latent state. Interacts with LRRC32/GARP; leading to regulate activation of TGF-beta-2. Interacts with NREP; the interaction results in a decrease in TGFB2 autoinduction. Transforming growth factor beta-2: Homodimer; disulfide-linked. Transforming growth factor beta-2: Interacts with TGF-beta receptors (TGFBR1 and TGFBR2), leading to signal transduction. The precursor proprotein is cleaved in the Golgi apparatus to form Transforming growth factor beta-2 (TGF-beta-2) and Latency-associated peptide (LAP) chains, which remain non-covalently linked, rendering TGF-beta-2 inactive.

The protein resides in the secreted. Its subcellular location is the extracellular space. The protein localises to the extracellular matrix. Precursor of the Latency-associated peptide (LAP) and Transforming growth factor beta-2 (TGF-beta-2) chains, which constitute the regulatory and active subunit of TGF-beta-2, respectively. Functionally, required to maintain the Transforming growth factor beta-2 (TGF-beta-2) chain in a latent state during storage in extracellular matrix. Associates non-covalently with TGF-beta-2 and regulates its activation via interaction with 'milieu molecules', such as LTBP1 and LRRC32/GARP, that control activation of TGF-beta-2. In terms of biological role, multifunctional protein that regulates various processes such as angiogenesis and heart development. Activation into mature form follows different steps: following cleavage of the proprotein in the Golgi apparatus, Latency-associated peptide (LAP) and Transforming growth factor beta-2 (TGF-beta-2) chains remain non-covalently linked rendering TGF-beta-2 inactive during storage in extracellular matrix. At the same time, LAP chain interacts with 'milieu molecules', such as LTBP1 and LRRC32/GARP, that control activation of TGF-beta-2 and maintain it in a latent state during storage in extracellular milieus. Once activated following release of LAP, TGF-beta-2 acts by binding to TGF-beta receptors (TGFBR1 and TGFBR2), which transduce signal. The polypeptide is Transforming growth factor beta-2 proprotein (TGFB2) (Bos taurus (Bovine)).